Consider the following 155-residue polypeptide: Deoxyuridine 5'-triphosphate nucleotidohydrolase (155 aa).

Substrate contacts are provided by residues 72–74, asparagine 85, 89–91, and lysine 99; these read RSG and TVD.

This sequence belongs to the dUTPase family. Mg(2+) is required as a cofactor.

It catalyses the reaction dUTP + H2O = dUMP + diphosphate + H(+). It functions in the pathway pyrimidine metabolism; dUMP biosynthesis; dUMP from dCTP (dUTP route): step 2/2. Functionally, this enzyme is involved in nucleotide metabolism: it produces dUMP, the immediate precursor of thymidine nucleotides and it decreases the intracellular concentration of dUTP so that uracil cannot be incorporated into DNA. The sequence is that of Deoxyuridine 5'-triphosphate nucleotidohydrolase from Parvibaculum lavamentivorans (strain DS-1 / DSM 13023 / NCIMB 13966).